A 348-amino-acid chain; its full sequence is Ethanol acetyltransferase 2 (348 aa).

The transit peptide at 1 to 19 directs the protein to the mitochondrion; that stretch reads MIFNSLSIKRLSSTXTSLP. The AB hydrolase-1 domain occupies 49–305; the sequence is IIFLHGIYGY…VMKERPQEYI (257 aa). Residues S121, D145, and H294 each act as charge relay system in the active site.

Belongs to the AB hydrolase superfamily.

The protein localises to the mitochondrion. It carries out the reaction ethanol + acetyl-CoA = ethyl acetate + CoA. The catalysed reaction is acetyl-CoA + H2O = acetate + CoA + H(+). The enzyme catalyses ethyl acetate + H2O = ethanol + acetate + H(+). Functionally, alcohol acetyltransferase that catalyzes the synthesis of ethyl acetate from ethanol and acetyl-CoA. Can also function as a thioesterase by hydrolyzing acetyl-CoA in the absence of ethanol, as well as esterase hydrolyzing ethyl acetate. This is Ethanol acetyltransferase 2 (EAT2) from Hanseniaspora uvarum (Yeast).